An 850-amino-acid chain; its full sequence is Ras GTPase-activating protein 2 (850 aa).

Residues methionine 1–proline 24 show a composition bias toward low complexity. The segment at methionine 1–arginine 32 is disordered. Residue alanine 2 is modified to N-acetylalanine. C2 domains follow at residues alanine 20–phenylalanine 138 and valine 149–tyrosine 289. Residues aspartate 372 to isoleucine 589 form the Ras-GAP domain. Serine 555 is modified (phosphoserine). Residues valine 604–arginine 706 enclose the PH domain. The Btk-type zinc-finger motif lies at asparagine 708 to glycine 744. Positions 716, 727, 728, and 738 each coordinate Zn(2+). The disordered stretch occupies residues histidine 825–serine 850.

The protein localises to the cytoplasm. The protein resides in the perinuclear region. Its function is as follows. Inhibitory regulator of the Ras-cyclic AMP pathway. Binds inositol tetrakisphosphate (IP4). The polypeptide is Ras GTPase-activating protein 2 (RASA2) (Homo sapiens (Human)).